The primary structure comprises 221 residues: 2-amino-5-formylamino-6-ribosylaminopyrimidin-4(3H)-one 5'-monophosphate deformylase (221 aa).

4 residues coordinate Fe cation: E29, H31, D40, and H108.

The protein belongs to the creatininase superfamily. FAPy deformylase family. In terms of assembly, homodimer. The cofactor is Fe(2+). It depends on Zn(2+) as a cofactor.

The catalysed reaction is 2-amino-5-formylamino-6-(5-phospho-D-ribosylamino)pyrimidin-4(3H)-one + H2O = 2,5-diamino-6-(1-D-ribosylamino)pyrimidin-4(3H)-one 5'-phosphate + formate + H(+). The protein operates within cofactor biosynthesis; coenzyme F420 biosynthesis. It functions in the pathway cofactor biosynthesis; riboflavin biosynthesis. Functionally, catalyzes the hydrolysis of the formamide of 2-amino-5-formylamino-6-ribosylamino-4(3H)-pyrimidinone 5'-monophosphate (FAPy) to form 2,5-diamino-6-ribosylamino-4(3H)-pyrimidinone 5'-phosphate (APy). This Methanococcus maripaludis (strain DSM 14266 / JCM 13030 / NBRC 101832 / S2 / LL) protein is 2-amino-5-formylamino-6-ribosylaminopyrimidin-4(3H)-one 5'-monophosphate deformylase.